The sequence spans 224 residues: Synaptogyrin-2 (224 aa).

Residue Met1 is modified to N-acetylmethionine. Ser3 carries the phosphoserine modification. Residues 20-171 (FLSQPQVVTR…LASLAYQRYK (152 aa)) form the MARVEL domain. A run of 4 helical transmembrane segments spans residues 31 to 51 (VSMV…YTNI), 72 to 92 (SAIG…DAFF), 105 to 125 (VIGD…GFCF), and 147 to 167 (AAIT…SLAY).

Belongs to the synaptogyrin family. May be tyrosine phosphorylated by Src.

It localises to the cytoplasmic vesicle membrane. The protein resides in the cytoplasmic vesicle. Its subcellular location is the secretory vesicle. The protein localises to the synaptic vesicle membrane. May play a role in regulated exocytosis. In neuronal cells, modulates the localization of synaptophysin/SYP into synaptic-like microvesicles and may therefore play a role in the formation and/or the maturation of this vesicles. May also play a role in GLUT4 storage and transport to the plasma membrane. The chain is Synaptogyrin-2 from Mus musculus (Mouse).